The sequence spans 126 residues: Histone H2B.5 (126 aa).

A compositionally biased stretch (basic and acidic residues) spans 1-27; it reads MAPKAEKKPSEKAPKADKKITKEGGSE. The segment at 1–34 is disordered; it reads MAPKAEKKPSEKAPKADKKITKEGGSERKKKTKK. A2 carries the n,N,N-trimethylalanine; alternate modification. The residue at position 2 (A2) is a N,N-dimethylalanine; alternate. A2 carries the N-methylalanine; alternate modification. Residue K4 is modified to N6-methyllysine. N6-acetyllysine occurs at positions 7, 12, 18, and 19. A Glycyl lysine isopeptide (Lys-Gly) (interchain with G-Cter in ubiquitin) cross-link involves residue K122.

It belongs to the histone H2B family. As to quaternary structure, the nucleosome is a histone octamer containing two molecules each of H2A, H2B, H3 and H4 assembled in one H3-H4 heterotetramer and two H2A-H2B heterodimers. The octamer wraps approximately 147 bp of DNA. Can be acetylated to form H2BK6ac, H2BK33ac and H2BK34ac. Post-translationally, monoubiquitinated by BRE1 to form H2BK143ub1 and deubiquitinated by UBP26. Required for heterochromatic histone H3 di- and trimethylation at H3K4me. May give a specific tag for epigenetic transcriptional activation.

The protein localises to the nucleus. It localises to the chromosome. In terms of biological role, core component of nucleosome. Nucleosomes wrap and compact DNA into chromatin, limiting DNA accessibility to the cellular machineries which require DNA as a template. Histones thereby play a central role in transcription regulation, DNA repair, DNA replication and chromosomal stability. DNA accessibility is regulated via a complex set of post-translational modifications of histones, also called histone code, and nucleosome remodeling. This chain is Histone H2B.5, found in Arabidopsis thaliana (Mouse-ear cress).